The primary structure comprises 137 residues: ATP synthase epsilon chain (137 aa).

This sequence belongs to the ATPase epsilon chain family. As to quaternary structure, F-type ATPases have 2 components, CF(1) - the catalytic core - and CF(0) - the membrane proton channel. CF(1) has five subunits: alpha(3), beta(3), gamma(1), delta(1), epsilon(1). CF(0) has three main subunits: a, b and c.

It localises to the cell inner membrane. Its function is as follows. Produces ATP from ADP in the presence of a proton gradient across the membrane. The sequence is that of ATP synthase epsilon chain from Ruegeria sp. (strain TM1040) (Silicibacter sp.).